Here is a 745-residue protein sequence, read N- to C-terminus: DEAD-box ATP-dependent RNA helicase 3A, chloroplastic (745 aa).

Residues 1–41 (MASLVTLPAIAFSNPATASGAVRLRAAAFRCWALRRRGWAV) constitute a chloroplast transit peptide. The Q motif motif lies at 88 to 116 (LAIARLGLPDELVATLEKRGITHLFPIQR). The Helicase ATP-binding domain occupies 119–295 (LIPALGGRDL…RRYLNNPLTI (177 aa)). 132-139 (AKTGTGKT) is a binding site for ATP. A DEAD box motif is present at residues 243–246 (DEAD). The Helicase C-terminal domain maps to 324–469 (ILSDLITVYA…ISPPSIEEVL (146 aa)). Positions 606-724 (LTKISKLPAL…SLGGRESSRS (119 aa)) are disordered. Over residues 641–650 (GGGASRGRGG) the composition is skewed to gly residues. Residues 656–670 (EDRYRRGGRSLRSDN) are compositionally biased toward basic and acidic residues. Over residues 687–724 (RSSSSFGGRSSSYGSRGSPSPSFGVRSSSLGGRESSRS) the composition is skewed to low complexity. A CCHC-type zinc finger spans residues 727–744 (GACFNCGESGHRASDCPN).

Belongs to the DEAD box helicase family. DDX21/DDX50 subfamily.

The protein resides in the plastid. The protein localises to the chloroplast. It catalyses the reaction ATP + H2O = ADP + phosphate + H(+). Functionally, nuclear genome-encoded factor involved in ribosome biogenesis in chloroplasts. Binds specific group II introns in chloroplasts and facilitates their splicing. Required for normal development of chloroplasts. In Zea mays (Maize), this protein is DEAD-box ATP-dependent RNA helicase 3A, chloroplastic.